The sequence spans 874 residues: Alanine--tRNA ligase (874 aa).

Zn(2+) contacts are provided by His-563, His-567, Cys-665, and His-669.

It belongs to the class-II aminoacyl-tRNA synthetase family. Zn(2+) serves as cofactor.

It is found in the cytoplasm. It catalyses the reaction tRNA(Ala) + L-alanine + ATP = L-alanyl-tRNA(Ala) + AMP + diphosphate. Its function is as follows. Catalyzes the attachment of alanine to tRNA(Ala) in a two-step reaction: alanine is first activated by ATP to form Ala-AMP and then transferred to the acceptor end of tRNA(Ala). Also edits incorrectly charged Ser-tRNA(Ala) and Gly-tRNA(Ala) via its editing domain. The sequence is that of Alanine--tRNA ligase from Actinobacillus succinogenes (strain ATCC 55618 / DSM 22257 / CCUG 43843 / 130Z).